The primary structure comprises 164 residues: Phosphopantetheine adenylyltransferase (164 aa).

Residue serine 10 coordinates substrate. Residues 10–11 (SF) and histidine 18 contribute to the ATP site. Residues lysine 42, methionine 74, and arginine 88 each contribute to the substrate site. Residues 89 to 91 (GLR), glutamate 99, and 124 to 130 (YFFVSAR) contribute to the ATP site.

This sequence belongs to the bacterial CoaD family. Homohexamer. The cofactor is Mg(2+).

It is found in the cytoplasm. The catalysed reaction is (R)-4'-phosphopantetheine + ATP + H(+) = 3'-dephospho-CoA + diphosphate. Its pathway is cofactor biosynthesis; coenzyme A biosynthesis; CoA from (R)-pantothenate: step 4/5. Reversibly transfers an adenylyl group from ATP to 4'-phosphopantetheine, yielding dephospho-CoA (dPCoA) and pyrophosphate. In Anaeromyxobacter dehalogenans (strain 2CP-C), this protein is Phosphopantetheine adenylyltransferase.